Consider the following 179-residue polypeptide: Ribosome maturation factor RimP (179 aa).

This sequence belongs to the RimP family.

It localises to the cytoplasm. In terms of biological role, required for maturation of 30S ribosomal subunits. The chain is Ribosome maturation factor RimP from Chlorobium chlorochromatii (strain CaD3).